The chain runs to 447 residues: Protein disulfide-isomerase like 2-2 (447 aa).

Positions 1–26 are cleaved as a signal peptide; the sequence is MERKMYKSTVFPICCLLFALFDRGNA. Thioredoxin domains lie at 27 to 139 and 161 to 275; these read LYGS…QIKA and KKKS…QLES. Residues C62 and C65 each act as nucleophile in the active site. Cysteines 62 and 65 form a disulfide. The interval 146 to 170 is disordered; it reads DGKTSGTKNGGGSSEKKKSEPSASV. N173 carries an N-linked (GlcNAc...) asparagine glycan. Catalysis depends on nucleophile residues C197 and C200. The cysteines at positions 197 and 200 are disulfide-linked. The Prevents secretion from ER motif lies at 444–447; sequence KDDL.

It belongs to the protein disulfide isomerase family. Widely expressed.

It localises to the endoplasmic reticulum lumen. The enzyme catalyses Catalyzes the rearrangement of -S-S- bonds in proteins.. Its function is as follows. Acts as a protein-folding catalyst that interacts with nascent polypeptides to catalyze the formation, isomerization, and reduction or oxidation of disulfide bonds. This is Protein disulfide-isomerase like 2-2 (PDIL2-2) from Arabidopsis thaliana (Mouse-ear cress).